The chain runs to 512 residues: Pantetheinase (512 aa).

A signal peptide spans 1–23; it reads MGMSWWLACAAAFSALCVLKASS. Positions 32-308 constitute a CN hydrolase domain; it reads YEHAVILPKD…GKLLFAQLKS (277 aa). Glu81 serves as the catalytic Proton acceptor. N-linked (GlcNAc...) asparagine glycans are attached at residues Asn132 and Asn148. Lys180 serves as the catalytic Proton donor. Cys213 acts as the Nucleophile in catalysis. Residues Asn316 and Asn354 are each glycosylated (N-linked (GlcNAc...) asparagine). Asn488 carries GPI-anchor amidated asparagine lipidation. Residues 489–512 constitute a propeptide, removed in mature form; it reads ASSDFIAHSLIIMLIVTPIIHYLC.

The protein belongs to the carbon-nitrogen hydrolase superfamily. BTD/VNN family. In terms of assembly, monomer. In terms of processing, N-glycosylated. As to expression, detected in kidney (at protein level). Ubiquitous.

The protein resides in the cell membrane. It catalyses the reaction (R)-pantetheine + H2O = cysteamine + (R)-pantothenate. Its function is as follows. Amidohydrolase that hydrolyzes specifically one of the carboamide linkages in D-pantetheine thus recycling pantothenic acid (vitamin B5) and releasing cysteamine. This Mus musculus (Mouse) protein is Pantetheinase (Vnn1).